Reading from the N-terminus, the 264-residue chain is ATP synthase subunit a (264 aa).

A run of 7 helical transmembrane segments spans residues 41–61, 99–119, 129–149, 156–176, 194–214, 217–237, and 238–258; these read ITNI…INLL, IYFP…LIGM, HFVL…ILGF, FFSL…LVLI, ANIL…YNIM, GIIF…FSGL, and ELGI…GYIK.

It belongs to the ATPase A chain family. As to quaternary structure, F-type ATPases have 2 components, CF(1) - the catalytic core - and CF(0) - the membrane proton channel. CF(1) has five subunits: alpha(3), beta(3), gamma(1), delta(1), epsilon(1). CF(0) has three main subunits: a, b and c.

It is found in the mitochondrion inner membrane. Functionally, mitochondrial membrane ATP synthase (F(1)F(0) ATP synthase or Complex V) produces ATP from ADP in the presence of a proton gradient across the membrane which is generated by electron transport complexes of the respiratory chain. F-type ATPases consist of two structural domains, F(1) - containing the extramembraneous catalytic core and F(0) - containing the membrane proton channel, linked together by a central stalk and a peripheral stalk. During catalysis, ATP synthesis in the catalytic domain of F(1) is coupled via a rotary mechanism of the central stalk subunits to proton translocation. Key component of the proton channel; it may play a direct role in the translocation of protons across the membrane. This Podospora anserina (strain S / ATCC MYA-4624 / DSM 980 / FGSC 10383) (Pleurage anserina) protein is ATP synthase subunit a (ATP6).